Here is a 791-residue protein sequence, read N- to C-terminus: Protein Rf1, mitochondrial (791 aa).

The N-terminal 27 residues, 1 to 27 (MARRAASRAVGALRSDGSIQGRGGRAG), are a transit peptide targeting the mitochondrion. A disordered region spans residues 1 to 31 (MARRAASRAVGALRSDGSIQGRGGRAGGSGA). Gly residues predominate over residues 20–30 (QGRGGRAGGSG). PPR repeat units lie at residues 86-120 (DLCT…GFRV), 121-156 (DAIA…GCIP), 157-194 (NVFS…GSPP), 195-229 (DVVS…GILP), 230-264 (DVVT…GVMP), 265-299 (DCMT…GVEP), 300-334 (DVVT…GLKP), 335-369 (EITT…GIHP), 370-404 (DHYV…GLNP), 405-439 (NAVT…GLSP), 440-474 (GNIV…GICL), 475-509 (NTIF…GVKP), 510-544 (NVIT…GLKP), 545-579 (NTVT…GVSP), 580-614 (DIIT…GTQI), 615-649 (ELST…DLKL), 650-684 (EART…GLVP), 685-719 (NYWT…GCTV), and 720-754 (DSGM…HFSL).

The protein localises to the mitochondrion. Its function is as follows. Reduces the expression of the cytoplasmic male sterility (CMS)-associated mitochondrial gene ORF79, encoding a cytotoxic peptide. Can restore male fertility by blocking ORF79 production via endonucleolytic cleavage of dicistronic ATP6/ORF79 mRNA. Promotes the editing of ATP6 mRNAs independently of its cleavage function. This chain is Protein Rf1, mitochondrial (Rf1), found in Oryza sativa subsp. indica (Rice).